A 315-amino-acid polypeptide reads, in one-letter code: FAD-linked oxidoreductase sthB (315 aa).

The FAD-binding PCMH-type domain maps to 19–201 (QPCSLGNYVS…LSMTSRVHAD (183 aa)).

The protein belongs to the oxygen-dependent FAD-linked oxidoreductase family.

The catalysed reaction is betaenone C = betaenone A. The enzyme catalyses stemphyloxin I = stemphyloxin II. It participates in mycotoxin biosynthesis. FAD-linked oxidoreductase; part of the gene cluster that mediates the biosynthesis of the phytotoxin stemphyloxin II. The first step of the pathway is the synthesis of dehydroprobetaenone I by the polyketide synthase sthA and the enoyl reductase sthE via condensation of one acetyl-CoA starter unit with 7 malonyl-CoA units and 5 methylations. The C-terminal reductase (R) domain of sthA catalyzes the reductive release of the polyketide chain. Because sthA lacks a designated enoylreductase (ER) domain, the required activity is provided the enoyl reductase sthE. The short-chain dehydrogenase/reductase sthC then catalyzes reduction of dehydroprobetaenone I to probetaenone I. The cytochrome P450 monooxygenase sthF catalyzes successive epoxidation, oxidation (resulting from epoxide opening) and hydroxylation to install a tertiary alcohol in the decaline ring to yield betaenone C from dehydroprobetaenone I and betaenone B from probetaenone I. The FAD-linked oxidoreductase sthB is responsible for the conversion of betaenone C to betaenone A via an intramolecular aldol reaction between C-1 and C-17 to form the bridged tricyclic system in betaenone A. Finally, the cytochrome P450 monooxygenase sthD catalyzes the hydroxylation of C-15 to afford the final metabolite stemphyloxin II. In Phaeosphaeria nodorum (strain SN15 / ATCC MYA-4574 / FGSC 10173) (Glume blotch fungus), this protein is FAD-linked oxidoreductase sthB.